The following is a 428-amino-acid chain: Putative aspergillopepsin A-like aspartic endopeptidase AFUA_2G15950 (428 aa).

The signal sequence occupies residues 1 to 19 (MHSLQSFLFLLLLGYGVFA). Residues 20–90 (APTSPQAQSQ…GTAANLVTDV (71 aa)) constitute a propeptide, activation peptide. A Peptidase A1 domain is found at 110 to 425 (FVSPVTIGGQ…DLRGPSIGLA (316 aa)). Residue aspartate 126 is part of the active site. N-linked (GlcNAc...) asparagine glycosylation occurs at asparagine 276. Residue aspartate 312 is part of the active site. N-linked (GlcNAc...) asparagine glycosylation occurs at asparagine 380.

It belongs to the peptidase A1 family.

It is found in the secreted. This is Putative aspergillopepsin A-like aspartic endopeptidase AFUA_2G15950 from Aspergillus fumigatus (strain ATCC MYA-4609 / CBS 101355 / FGSC A1100 / Af293) (Neosartorya fumigata).